The following is a 309-amino-acid chain: Ferrochelatase (309 aa).

2 residues coordinate Fe cation: His-187 and Glu-265.

It belongs to the ferrochelatase family.

Its subcellular location is the cytoplasm. It catalyses the reaction heme b + 2 H(+) = protoporphyrin IX + Fe(2+). The protein operates within porphyrin-containing compound metabolism; protoheme biosynthesis; protoheme from protoporphyrin-IX: step 1/1. Functionally, catalyzes the ferrous insertion into protoporphyrin IX. The protein is Ferrochelatase of Nitratiruptor sp. (strain SB155-2).